The following is a 327-amino-acid chain: Malate dehydrogenase (327 aa).

Residue Gly11 to Ser17 participates in NAD(+) binding. Substrate-binding residues include Arg92 and Arg98. NAD(+)-binding positions include Asn105, Gln112, and Val129–Asn131. The substrate site is built by Asn131 and Arg162. His187 (proton acceptor) is an active-site residue. The disordered stretch occupies residues Ser304–Pro327.

Belongs to the LDH/MDH superfamily. MDH type 2 family.

It carries out the reaction (S)-malate + NAD(+) = oxaloacetate + NADH + H(+). Its function is as follows. Catalyzes the reversible oxidation of malate to oxaloacetate. The polypeptide is Malate dehydrogenase (Psychrobacter sp. (strain PRwf-1)).